The sequence spans 500 residues: Glucose-6-phosphate isomerase (500 aa).

The active-site Proton donor is the Glu-332. Active-site residues include His-363 and Lys-473.

This sequence belongs to the GPI family.

The protein localises to the cytoplasm. It catalyses the reaction alpha-D-glucose 6-phosphate = beta-D-fructose 6-phosphate. It participates in carbohydrate biosynthesis; gluconeogenesis. Its pathway is carbohydrate degradation; glycolysis; D-glyceraldehyde 3-phosphate and glycerone phosphate from D-glucose: step 2/4. Catalyzes the reversible isomerization of glucose-6-phosphate to fructose-6-phosphate. In Rhizorhabdus wittichii (strain DSM 6014 / CCUG 31198 / JCM 15750 / NBRC 105917 / EY 4224 / RW1) (Sphingomonas wittichii), this protein is Glucose-6-phosphate isomerase.